Here is a 459-residue protein sequence, read N- to C-terminus: Ribulose bisphosphate carboxylase (459 aa).

Asparagine 111 contributes to the substrate binding site. Catalysis depends on lysine 166, which acts as the Proton acceptor. Lysine 168 is a substrate binding site. Positions 191, 193, and 194 each coordinate Mg(2+). Lysine 191 bears the N6-carboxylysine mark. Residue histidine 287 is the Proton acceptor of the active site. Residues arginine 288, histidine 321, and serine 368 each contribute to the substrate site.

It belongs to the RuBisCO large chain family. Type II subfamily. Homodimer. Mg(2+) serves as cofactor.

It carries out the reaction 2 (2R)-3-phosphoglycerate + 2 H(+) = D-ribulose 1,5-bisphosphate + CO2 + H2O. The catalysed reaction is D-ribulose 1,5-bisphosphate + O2 = 2-phosphoglycolate + (2R)-3-phosphoglycerate + 2 H(+). Its function is as follows. RuBisCO catalyzes two reactions: the carboxylation of D-ribulose 1,5-bisphosphate, the primary event in carbon dioxide fixation, as well as the oxidative fragmentation of the pentose substrate. Both reactions occur simultaneously and in competition at the same active site. The protein is Ribulose bisphosphate carboxylase of Dechloromonas aromatica (strain RCB).